The primary structure comprises 207 residues: MSPLLRRLLLVALLQLARTQAPVSQFDGPSHQKKVVPWIDVYARATCQPREVVVPLSMELMGNVVKQLVPSCVTVQRCGGCCPDDGLECVPTGQHQVRMQILMIQYPSSQLGEMSLEEHSQCECRPKKKESAVKPDRVAIPHHRPQPRSVPGWDSTPGASSPADIIHPTPAPGSSARLAPSAVNALTPGPAAAAADAAASSIAKGGA.

The first 21 residues, 1–21 (MSPLLRRLLLVALLQLARTQA), serve as a signal peptide directing secretion. Cystine bridges form between Cys-47-Cys-89, Cys-78-Cys-122, and Cys-82-Cys-124. The span at 129–139 (KESAVKPDRVA) shows a compositional bias: basic and acidic residues. A disordered region spans residues 129-178 (KESAVKPDRVAIPHHRPQPRSVPGWDSTPGASSPADIIHPTPAPGSSARL).

The protein belongs to the PDGF/VEGF growth factor family. As to quaternary structure, homodimer; disulfide-linked. Can also form heterodimer with VEGF. VEGF-B186 is O-glycosylated. Abundantly expressed in heart, brain, kidney and skeletal muscle.

The protein localises to the secreted. Growth factor for endothelial cells. VEGF-B167 binds heparin and neuropilin-1 whereas the binding to neuropilin-1 of VEGF-B186 is regulated by proteolysis. VEGF-B seems to be required for normal heart function in adult but is not required for proper development of the cardiovascular system either during development or for angiogenesis in adults. The polypeptide is Vascular endothelial growth factor B (Vegfb) (Mus musculus (Mouse)).